The primary structure comprises 468 residues: Eukaryotic translation initiation factor 3 subunit M (468 aa).

A disordered region spans residues 40–61 (VAPLIEPLRQQEQSEEEPDRKQ). The 172-residue stretch at 206–377 (DLELAQTHVV…SEFLVHRATY (172 aa)) folds into the PCI domain. The segment at 419–468 (QAAAEEVGQGKSGDKGAKGGDRRRNPQQQQQSQPSQPQQAREVELVGGAE) is disordered. Basic and acidic residues predominate over residues 430–442 (SGDKGAKGGDRRR). Over residues 444-457 (PQQQQQSQPSQPQQ) the composition is skewed to low complexity.

Belongs to the eIF-3 subunit M family. Component of the eukaryotic translation initiation factor 3 (eIF-3) complex.

It is found in the cytoplasm. In terms of biological role, component of the eukaryotic translation initiation factor 3 (eIF-3) complex, which is involved in protein synthesis of a specialized repertoire of mRNAs and, together with other initiation factors, stimulates binding of mRNA and methionyl-tRNAi to the 40S ribosome. The eIF-3 complex specifically targets and initiates translation of a subset of mRNAs involved in cell proliferation. This is Eukaryotic translation initiation factor 3 subunit M from Aspergillus fumigatus (strain CBS 144.89 / FGSC A1163 / CEA10) (Neosartorya fumigata).